The following is a 396-amino-acid chain: Tryptophan synthase beta chain (396 aa).

N6-(pyridoxal phosphate)lysine is present on Lys86.

Belongs to the TrpB family. In terms of assembly, tetramer of two alpha and two beta chains. Requires pyridoxal 5'-phosphate as cofactor.

The enzyme catalyses (1S,2R)-1-C-(indol-3-yl)glycerol 3-phosphate + L-serine = D-glyceraldehyde 3-phosphate + L-tryptophan + H2O. It functions in the pathway amino-acid biosynthesis; L-tryptophan biosynthesis; L-tryptophan from chorismate: step 5/5. The beta subunit is responsible for the synthesis of L-tryptophan from indole and L-serine. The polypeptide is Tryptophan synthase beta chain (Serratia proteamaculans (strain 568)).